The following is a 334-amino-acid chain: Glycerol-3-phosphate dehydrogenase [NAD(P)+] (334 aa).

NADPH contacts are provided by W13, R33, and K106. Positions 106, 137, and 139 each coordinate sn-glycerol 3-phosphate. NADPH is bound at residue A141. Residues K192, D245, S255, R256, and N257 each coordinate sn-glycerol 3-phosphate. The active-site Proton acceptor is the K192. R256 lines the NADPH pocket. NADPH-binding residues include V280 and E282.

Belongs to the NAD-dependent glycerol-3-phosphate dehydrogenase family.

Its subcellular location is the cytoplasm. The catalysed reaction is sn-glycerol 3-phosphate + NAD(+) = dihydroxyacetone phosphate + NADH + H(+). The enzyme catalyses sn-glycerol 3-phosphate + NADP(+) = dihydroxyacetone phosphate + NADPH + H(+). It participates in membrane lipid metabolism; glycerophospholipid metabolism. Catalyzes the reduction of the glycolytic intermediate dihydroxyacetone phosphate (DHAP) to sn-glycerol 3-phosphate (G3P), the key precursor for phospholipid synthesis. This Chlamydia trachomatis serovar L2b (strain UCH-1/proctitis) protein is Glycerol-3-phosphate dehydrogenase [NAD(P)+].